The following is a 441-amino-acid chain: Xaa-Pro dipeptidase (441 aa).

Positions 244, 255, 336, 381, and 420 each coordinate Mn(2+).

It belongs to the peptidase M24B family. Bacterial-type prolidase subfamily. Mn(2+) is required as a cofactor.

It carries out the reaction Xaa-L-Pro dipeptide + H2O = an L-alpha-amino acid + L-proline. Functionally, splits dipeptides with a prolyl residue in the C-terminal position. The protein is Xaa-Pro dipeptidase of Xanthomonas axonopodis pv. citri (strain 306).